The sequence spans 725 residues: Eukaryotic translation initiation factor 3 subunit B (725 aa).

Residues asparagine 46–aspartate 130 enclose the RRM domain. 6 WD repeats span residues arginine 202 to arginine 240, alanine 242 to isoleucine 280, valine 354 to arginine 395, proline 462 to lysine 504, aspartate 510 to threonine 552, and valine 554 to glutamine 594.

The protein belongs to the eIF-3 subunit B family. As to quaternary structure, component of the eukaryotic translation initiation factor 3 (eIF-3) complex.

It localises to the cytoplasm. Functionally, RNA-binding component of the eukaryotic translation initiation factor 3 (eIF-3) complex, which is involved in protein synthesis of a specialized repertoire of mRNAs and, together with other initiation factors, stimulates binding of mRNA and methionyl-tRNAi to the 40S ribosome. The eIF-3 complex specifically targets and initiates translation of a subset of mRNAs involved in cell proliferation. This Caenorhabditis elegans protein is Eukaryotic translation initiation factor 3 subunit B.